Reading from the N-terminus, the 538-residue chain is MALSSTSTTNSLLPNRSLVQNQPLLPSPLKNAFFSNNSTKTVRFVQPISAVHSSDSNKIPIVSDKPSKSSPPAATATTAPAPAVTKTEWAVDSWKSKKALQLPEYPNQEELRSVLKTIDEFPPIVFAGEARSLEERLGEAAMGRAFLLQGGDCAESFKEFNANNIRDTFRILLQMGAVLMFGGQMPVIKVGRMAGQFAKPRSDSFEEKDGVKLPSYRGDNVNGDAFDVKSRTPDPQRLIRAYCQSAATLNLLRAFATGGYAAMQRINQWNLDFTEHSEQGDRYRELASRVDEALGFMTAAGLTMDHPIMKTTEFWTSHECLLLPYEQSLTRRDSTSGLYYDCSAHFLWVGERTRQLDGAHVEFLRGIANPLGIKVSDKMDPSALVKLIEILNPQNKAGRITIITRMGAENMRVKLPHLIRAVRRAGQIVTWVSDPMHGNTIKAPCGLKTRPFDSIRAEVRAFFDVHDQEGSHPGGVHLEMTGQNVTECIGGSRTVTFDDLSSRYHTHCDPRLNASQSLELSFIIAERLRKRRLGSQSV.

The N-terminal 74 residues, 1 to 74 (MALSSTSTTN…KPSKSSPPAA (74 aa)), are a transit peptide targeting the chloroplast. Residues 55 to 82 (DSNKIPIVSDKPSKSSPPAATATTAPAP) are disordered. Residues 68 to 82 (KSSPPAATATTAPAP) are compositionally biased toward low complexity. The residue at position 75 (Thr75) is a Blocked amino end (Thr).

This sequence belongs to the class-II DAHP synthase family.

The protein localises to the plastid. It is found in the chloroplast. The catalysed reaction is D-erythrose 4-phosphate + phosphoenolpyruvate + H2O = 7-phospho-2-dehydro-3-deoxy-D-arabino-heptonate + phosphate. Its pathway is metabolic intermediate biosynthesis; chorismate biosynthesis; chorismate from D-erythrose 4-phosphate and phosphoenolpyruvate: step 1/7. Its activity is regulated as follows. Activation by tryptophan (a hysteretic factor). The chain is Phospho-2-dehydro-3-deoxyheptonate aldolase 1, chloroplastic (SHKA) from Solanum tuberosum (Potato).